A 399-amino-acid polypeptide reads, in one-letter code: Probable tRNA sulfurtransferase (399 aa).

A THUMP domain is found at 60-165 (YAVMERLKRV…TEGTYISCET (106 aa)). Residues 183–184 (LL), 208–209 (HF), Arg265, Gly287, and Gln296 contribute to the ATP site.

This sequence belongs to the ThiI family.

It localises to the cytoplasm. It catalyses the reaction [ThiI sulfur-carrier protein]-S-sulfanyl-L-cysteine + a uridine in tRNA + 2 reduced [2Fe-2S]-[ferredoxin] + ATP + H(+) = [ThiI sulfur-carrier protein]-L-cysteine + a 4-thiouridine in tRNA + 2 oxidized [2Fe-2S]-[ferredoxin] + AMP + diphosphate. The enzyme catalyses [ThiS sulfur-carrier protein]-C-terminal Gly-Gly-AMP + S-sulfanyl-L-cysteinyl-[cysteine desulfurase] + AH2 = [ThiS sulfur-carrier protein]-C-terminal-Gly-aminoethanethioate + L-cysteinyl-[cysteine desulfurase] + A + AMP + 2 H(+). The protein operates within cofactor biosynthesis; thiamine diphosphate biosynthesis. Its function is as follows. Catalyzes the ATP-dependent transfer of a sulfur to tRNA to produce 4-thiouridine in position 8 of tRNAs, which functions as a near-UV photosensor. Also catalyzes the transfer of sulfur to the sulfur carrier protein ThiS, forming ThiS-thiocarboxylate. This is a step in the synthesis of thiazole, in the thiamine biosynthesis pathway. The sulfur is donated as persulfide by IscS. The polypeptide is Probable tRNA sulfurtransferase (Brevibacillus brevis (strain 47 / JCM 6285 / NBRC 100599)).